The sequence spans 111 residues: Large ribosomal subunit protein uL22 (111 aa).

It belongs to the universal ribosomal protein uL22 family. In terms of assembly, part of the 50S ribosomal subunit.

This protein binds specifically to 23S rRNA; its binding is stimulated by other ribosomal proteins, e.g. L4, L17, and L20. It is important during the early stages of 50S assembly. It makes multiple contacts with different domains of the 23S rRNA in the assembled 50S subunit and ribosome. Its function is as follows. The globular domain of the protein is located near the polypeptide exit tunnel on the outside of the subunit, while an extended beta-hairpin is found that lines the wall of the exit tunnel in the center of the 70S ribosome. The chain is Large ribosomal subunit protein uL22 from Clostridium tetani (strain Massachusetts / E88).